Consider the following 270-residue polypeptide: Putative carbamate hydrolase RutD (270 aa).

Belongs to the AB hydrolase superfamily. Hydrolase RutD family.

It carries out the reaction carbamate + 2 H(+) = NH4(+) + CO2. Functionally, involved in pyrimidine catabolism. May facilitate the hydrolysis of carbamate, a reaction that can also occur spontaneously. In Escherichia coli O44:H18 (strain 042 / EAEC), this protein is Putative carbamate hydrolase RutD.